Here is a 135-residue protein sequence, read N- to C-terminus: Small ribosomal subunit protein uS12c (135 aa).

The protein belongs to the universal ribosomal protein uS12 family. Part of the 30S ribosomal subunit.

The protein resides in the plastid. Its subcellular location is the chloroplast. In terms of biological role, with S4 and S5 plays an important role in translational accuracy. Located at the interface of the 30S and 50S subunits. The protein is Small ribosomal subunit protein uS12c (rps12) of Adiantum capillus-veneris (Maidenhair fern).